A 104-amino-acid polypeptide reads, in one-letter code: Ig lambda-2 chain C region (104 aa).

In terms of domain architecture, Ig-like spans 6–99; that stretch reads PTLTVFPPSS…EGDTVEKSLS (94 aa). A disulfide bridge connects residues Cys27 and Cys85.

The chain is Ig lambda-2 chain C region (Iglc2) from Mus musculus (Mouse).